Here is a 359-residue protein sequence, read N- to C-terminus: 3-dehydroquinate synthase (359 aa).

NAD(+)-binding positions include 106–110 (GVVGD), 130–131 (TS), lysine 143, and lysine 152. Zn(2+) contacts are provided by glutamate 185, histidine 246, and histidine 262.

Belongs to the sugar phosphate cyclases superfamily. Dehydroquinate synthase family. The cofactor is NAD(+). Co(2+) serves as cofactor. Zn(2+) is required as a cofactor.

The protein localises to the cytoplasm. The catalysed reaction is 7-phospho-2-dehydro-3-deoxy-D-arabino-heptonate = 3-dehydroquinate + phosphate. The protein operates within metabolic intermediate biosynthesis; chorismate biosynthesis; chorismate from D-erythrose 4-phosphate and phosphoenolpyruvate: step 2/7. Its function is as follows. Catalyzes the conversion of 3-deoxy-D-arabino-heptulosonate 7-phosphate (DAHP) to dehydroquinate (DHQ). This chain is 3-dehydroquinate synthase, found in Lactiplantibacillus plantarum (strain ATCC BAA-793 / NCIMB 8826 / WCFS1) (Lactobacillus plantarum).